The sequence spans 216 residues: Soluble inorganic pyrophosphatase 3 (216 aa).

Positions Met1–Gln10 are enriched in acidic residues. The disordered stretch occupies residues Met1–Lys21. Residues Lys66 and Arg80 each coordinate substrate. Tyr88 acts as the Proton donor in catalysis. Tyr92 is a binding site for substrate. Mg(2+)-binding residues include Asp102, Asp107, and Asp139. Tyr176 serves as a coordination point for substrate.

This sequence belongs to the PPase family. It depends on Mg(2+) as a cofactor. As to expression, expressed preferentially in stamen, pollen and flower, and at a low level in lateral roots and root elongation zones.

It localises to the cytoplasm. The catalysed reaction is diphosphate + H2O = 2 phosphate + H(+). The protein is Soluble inorganic pyrophosphatase 3 of Arabidopsis thaliana (Mouse-ear cress).